A 370-amino-acid polypeptide reads, in one-letter code: tRNA/tmRNA (uracil-C(5))-methyltransferase (370 aa).

S-adenosyl-L-methionine contacts are provided by Q195, Y221, N226, E242, and D302. The Nucleophile role is filled by C327. Residue E361 is the Proton acceptor of the active site.

Belongs to the class I-like SAM-binding methyltransferase superfamily. RNA M5U methyltransferase family. TrmA subfamily.

The catalysed reaction is uridine(54) in tRNA + S-adenosyl-L-methionine = 5-methyluridine(54) in tRNA + S-adenosyl-L-homocysteine + H(+). It carries out the reaction uridine(341) in tmRNA + S-adenosyl-L-methionine = 5-methyluridine(341) in tmRNA + S-adenosyl-L-homocysteine + H(+). Dual-specificity methyltransferase that catalyzes the formation of 5-methyluridine at position 54 (m5U54) in all tRNAs, and that of position 341 (m5U341) in tmRNA (transfer-mRNA). This chain is tRNA/tmRNA (uracil-C(5))-methyltransferase, found in Wolinella succinogenes (strain ATCC 29543 / DSM 1740 / CCUG 13145 / JCM 31913 / LMG 7466 / NCTC 11488 / FDC 602W) (Vibrio succinogenes).